A 340-amino-acid chain; its full sequence is Ribonucleoside-diphosphate reductase small subunit (340 aa).

Fe cation-binding residues include Asp94, Glu124, and His127. Residue Tyr131 is part of the active site. The chain crosses the membrane as a helical span at residues 180–200; it reads FILMILIEGIFFAASFAAIAY. Glu187, Glu221, and His224 together coordinate Fe cation.

This sequence belongs to the ribonucleoside diphosphate reductase small chain family. In terms of assembly, heterotetramer composed of a homodimer of the large subunit (R1) and a homodimer of the small subunit (R2). Larger multisubunit protein complex are also active, composed of (R1)n(R2)n. Fe cation serves as cofactor.

The protein localises to the host membrane. It carries out the reaction a 2'-deoxyribonucleoside 5'-diphosphate + [thioredoxin]-disulfide + H2O = a ribonucleoside 5'-diphosphate + [thioredoxin]-dithiol. In terms of biological role, ribonucleoside-diphosphate reductase holoenzyme provides the precursors necessary for viral DNA synthesis. Allows virus growth in non-dividing cells, as well as reactivation from latency in infected hosts. Catalyzes the biosynthesis of deoxyribonucleotides from the corresponding ribonucleotides. This is Ribonucleoside-diphosphate reductase small subunit from Human herpesvirus 1 (strain KOS) (HHV-1).